We begin with the raw amino-acid sequence, 465 residues long: Argininosuccinate lyase (465 aa).

Belongs to the lyase 1 family. Argininosuccinate lyase subfamily.

It localises to the cytoplasm. It carries out the reaction 2-(N(omega)-L-arginino)succinate = fumarate + L-arginine. It participates in amino-acid biosynthesis; L-arginine biosynthesis; L-arginine from L-ornithine and carbamoyl phosphate: step 3/3. This is Argininosuccinate lyase from Rhodopseudomonas palustris (strain BisB18).